Here is a 273-residue protein sequence, read N- to C-terminus: Large ribosomal subunit protein uL2 (273 aa).

Disordered stretches follow at residues 28–53 (KPFAPLVEKNSKSGGRNNNGRITTRH) and 221–273 (RGTA…RRSK). Low complexity predominate over residues 39-48 (KSGGRNNNGR).

This sequence belongs to the universal ribosomal protein uL2 family. Part of the 50S ribosomal subunit. Forms a bridge to the 30S subunit in the 70S ribosome.

One of the primary rRNA binding proteins. Required for association of the 30S and 50S subunits to form the 70S ribosome, for tRNA binding and peptide bond formation. It has been suggested to have peptidyltransferase activity; this is somewhat controversial. Makes several contacts with the 16S rRNA in the 70S ribosome. This is Large ribosomal subunit protein uL2 from Enterobacter sp. (strain 638).